We begin with the raw amino-acid sequence, 1379 residues long: DNA-directed RNA polymerase subunit beta (1379 aa).

Belongs to the RNA polymerase beta chain family. As to quaternary structure, the RNAP catalytic core consists of 2 alpha, 1 beta, 1 beta' and 1 omega subunit. When a sigma factor is associated with the core the holoenzyme is formed, which can initiate transcription.

The catalysed reaction is RNA(n) + a ribonucleoside 5'-triphosphate = RNA(n+1) + diphosphate. DNA-dependent RNA polymerase catalyzes the transcription of DNA into RNA using the four ribonucleoside triphosphates as substrates. The chain is DNA-directed RNA polymerase subunit beta from Rhizobium etli (strain ATCC 51251 / DSM 11541 / JCM 21823 / NBRC 15573 / CFN 42).